Here is a 245-residue protein sequence, read N- to C-terminus: Octanoyltransferase (245 aa).

A BPL/LPL catalytic domain is found at 54–238 (GEATELVWLL…AFENIFGETR (185 aa)). Substrate-binding positions include 92–99 (RGGQLTYH), 167–169 (AIG), and 180–182 (GIA). Catalysis depends on cysteine 198, which acts as the Acyl-thioester intermediate.

It belongs to the LipB family.

The protein resides in the cytoplasm. It carries out the reaction octanoyl-[ACP] + L-lysyl-[protein] = N(6)-octanoyl-L-lysyl-[protein] + holo-[ACP] + H(+). Its pathway is protein modification; protein lipoylation via endogenous pathway; protein N(6)-(lipoyl)lysine from octanoyl-[acyl-carrier-protein]: step 1/2. Its function is as follows. Catalyzes the transfer of endogenously produced octanoic acid from octanoyl-acyl-carrier-protein onto the lipoyl domains of lipoate-dependent enzymes. Lipoyl-ACP can also act as a substrate although octanoyl-ACP is likely to be the physiological substrate. The sequence is that of Octanoyltransferase from Rhodopseudomonas palustris (strain TIE-1).